Consider the following 208-residue polypeptide: MTLQTFKSTDFEVFTVDGLEERMSAIKTNIHPKLEALGEQFAAYLSKQTDENFFYHVAKHARRKVNPPNDTWVAFSTNKRGYKMLPHFQIGLWGTHAFIYFGLIYECPQKVETAHAFLEHINDLKTNIPNDFVWSIDHTKPSVKLHKTLETNDLQKMIERLATVKKAELLVGIHISPEEFSAMTNEQFLAKIESTMQSLLPLYALCNR.

Belongs to the UPF0637 family.

The sequence is that of UPF0637 protein BCQ_3749 from Bacillus cereus (strain Q1).